The following is a 317-amino-acid chain: MSWFDRLRQGLSKTRQQISGTAGPLDQEVQTAFTRIDNIEDLEYALIAADVGRAATEEIIEDIRKNGEGRLQDALMRALTLQLEPNARRAQFRELGFSPDVSRSKVDPKGHVVMVIGVNGVGKTTTIAKLGQYYMERGQSVMFAAGDTFRAAAGTQLGVWGERLGVPVIQGVDGGDPAAVAFDAAGARKARGTDLLFVDTAGRLHNKHNLMEELKKVRRVIDKADPGEPAEVWLVLDAVTGQNGLQQAKKFHEATPLTGVVVTKLDGTAKGGILVPIVRELGVPIKFIGVGEQPGDLQPFDSQEFVRALFDVELPKA.

GTP contacts are provided by residues 117–124 (GVNGVGKT), 199–203 (DTAGR), and 263–266 (TKLD).

Belongs to the GTP-binding SRP family. FtsY subfamily. Part of the signal recognition particle protein translocation system, which is composed of SRP and FtsY.

The protein localises to the cell membrane. It is found in the cytoplasm. The enzyme catalyses GTP + H2O = GDP + phosphate + H(+). In terms of biological role, involved in targeting and insertion of nascent membrane proteins into the cytoplasmic membrane. Acts as a receptor for the complex formed by the signal recognition particle (SRP) and the ribosome-nascent chain (RNC). The protein is Signal recognition particle receptor FtsY of Deinococcus radiodurans (strain ATCC 13939 / DSM 20539 / JCM 16871 / CCUG 27074 / LMG 4051 / NBRC 15346 / NCIMB 9279 / VKM B-1422 / R1).